A 276-amino-acid chain; its full sequence is Undecaprenyl-diphosphatase 2 (276 aa).

A run of 7 helical transmembrane segments spans residues Ile3–Pro23, Ala48–Phe68, Leu92–Glu112, Leu119–Ala139, Ala196–Ile216, Asp225–Val245, and Ile255–Phe275.

It belongs to the UppP family.

The protein resides in the cell membrane. The catalysed reaction is di-trans,octa-cis-undecaprenyl diphosphate + H2O = di-trans,octa-cis-undecaprenyl phosphate + phosphate + H(+). Functionally, catalyzes the dephosphorylation of undecaprenyl diphosphate (UPP). Confers resistance to bacitracin. This is Undecaprenyl-diphosphatase 2 from Bacillus licheniformis (strain ATCC 14580 / DSM 13 / JCM 2505 / CCUG 7422 / NBRC 12200 / NCIMB 9375 / NCTC 10341 / NRRL NRS-1264 / Gibson 46).